Here is a 239-residue protein sequence, read N- to C-terminus: Yolk ferritin (239 aa).

Positions 1–18 (MNSVLFLTLAVCSSLAYG) are cleaved as a signal peptide. One can recognise a Ferritin-like diiron domain in the interval 27 to 217 (QNYKENINQL…HAITRLRSFE (191 aa)). Residues E44 and E79 each contribute to the Fe cation site. Positions 105–146 (KDACETVMKFVTSDTSGLEEFRDRRMCICGFVATKTINDNCG) are insertion; not present in other ferritins. Fe cation contacts are provided by E165 and Q199.

It belongs to the ferritin family. As to quaternary structure, oligomer of 12 or 24 subunits. The functional molecule is roughly spherical and contains a central cavity into which the polymeric ferric iron core is deposited. As to expression, midgut gland and bloodstream.

Its subcellular location is the secreted. The catalysed reaction is 4 Fe(2+) + O2 + 4 H(+) = 4 Fe(3+) + 2 H2O. Functionally, stores iron in a soluble, non-toxic, readily available form. Important for iron homeostasis. Has ferroxidase activity. Iron is taken up in the ferrous form and deposited as ferric hydroxides after oxidation. The chain is Yolk ferritin from Lymnaea stagnalis (Great pond snail).